Here is a 588-residue protein sequence, read N- to C-terminus: Aspartate--tRNA ligase (588 aa).

Position 177 (glutamate 177) interacts with L-aspartate. The aspartate stretch occupies residues 201–204 (QLFK). Arginine 223 is an L-aspartate binding site. Residues 223-225 (RDE) and glutamine 232 each bind ATP. Residue histidine 451 coordinates L-aspartate. Glutamate 485 contributes to the ATP binding site. Position 492 (arginine 492) interacts with L-aspartate. 537–540 (GLDR) is a binding site for ATP.

Belongs to the class-II aminoacyl-tRNA synthetase family. Type 1 subfamily. In terms of assembly, homodimer.

It is found in the cytoplasm. It carries out the reaction tRNA(Asp) + L-aspartate + ATP = L-aspartyl-tRNA(Asp) + AMP + diphosphate. Its function is as follows. Catalyzes the attachment of L-aspartate to tRNA(Asp) in a two-step reaction: L-aspartate is first activated by ATP to form Asp-AMP and then transferred to the acceptor end of tRNA(Asp). In Staphylococcus carnosus (strain TM300), this protein is Aspartate--tRNA ligase.